A 127-amino-acid polypeptide reads, in one-letter code: Aspartate 1-decarboxylase (127 aa).

Ser-25 serves as the catalytic Schiff-base intermediate with substrate; via pyruvic acid. Residue Ser-25 is modified to Pyruvic acid (Ser). Thr-57 serves as a coordination point for substrate. Catalysis depends on Tyr-58, which acts as the Proton donor. Residue 73 to 75 (GAA) coordinates substrate.

It belongs to the PanD family. Heterooctamer of four alpha and four beta subunits. The cofactor is pyruvate. Post-translationally, is synthesized initially as an inactive proenzyme, which is activated by self-cleavage at a specific serine bond to produce a beta-subunit with a hydroxyl group at its C-terminus and an alpha-subunit with a pyruvoyl group at its N-terminus.

It is found in the cytoplasm. The enzyme catalyses L-aspartate + H(+) = beta-alanine + CO2. The protein operates within cofactor biosynthesis; (R)-pantothenate biosynthesis; beta-alanine from L-aspartate: step 1/1. Functionally, catalyzes the pyruvoyl-dependent decarboxylation of aspartate to produce beta-alanine. This is Aspartate 1-decarboxylase from Clostridium botulinum (strain Loch Maree / Type A3).